Consider the following 362-residue polypeptide: Salactin (362 aa).

Residues 1–10 (MSDDTEDDSG) show a composition bias toward acidic residues. A disordered region spans residues 1-28 (MSDDTEDDSGGESTADMEFGEQPAPLGV).

As to quaternary structure, forms dynamically unstable filaments. Monomers are added at the growing filament end. In vitro, salactin polymerizes in the presence of ATP and AMP-PNP but not in the presence of ADP, GTP, ATPgammaS or buffer alone.

The protein resides in the cytoplasm. In terms of biological role, actin homolog which might be involved in partitioning DNA between daughter cells when chromosomal copy number is low. The chain is Salactin from Halobacterium salinarum (strain ATCC 700922 / JCM 11081 / NRC-1) (Halobacterium halobium).